We begin with the raw amino-acid sequence, 977 residues long: Alanine--tRNA ligase (977 aa).

The segment at 512-535 (SQVDSKLQSSTPAGTGSYDSKQVS) is disordered. Zn(2+) is bound by residues His618, His622, Cys720, and His724.

This sequence belongs to the class-II aminoacyl-tRNA synthetase family. Zn(2+) is required as a cofactor.

The protein resides in the cytoplasm. It catalyses the reaction tRNA(Ala) + L-alanine + ATP = L-alanyl-tRNA(Ala) + AMP + diphosphate. In terms of biological role, catalyzes the attachment of alanine to tRNA(Ala) in a two-step reaction: alanine is first activated by ATP to form Ala-AMP and then transferred to the acceptor end of tRNA(Ala). Also edits incorrectly charged Ser-tRNA(Ala) and Gly-tRNA(Ala) via its editing domain. The chain is Alanine--tRNA ligase from Leptospira interrogans serogroup Icterohaemorrhagiae serovar Lai (strain 56601).